The chain runs to 41 residues: Perlinhibin (41 aa).

Post-translationally, contains four disulfide bonds.

Its function is as follows. Binds to calcite crystals in the shell and inhibits further shell growth at the binding site. This chain is Perlinhibin, found in Haliotis laevigata (Smooth Australian abalone).